Consider the following 467-residue polypeptide: UDP-N-acetylmuramate--L-alanine ligase (467 aa).

Residue 114–120 participates in ATP binding; it reads GTHGKTT.

It belongs to the MurCDEF family.

The protein resides in the cytoplasm. It carries out the reaction UDP-N-acetyl-alpha-D-muramate + L-alanine + ATP = UDP-N-acetyl-alpha-D-muramoyl-L-alanine + ADP + phosphate + H(+). It functions in the pathway cell wall biogenesis; peptidoglycan biosynthesis. Functionally, cell wall formation. This chain is UDP-N-acetylmuramate--L-alanine ligase, found in Rhodopseudomonas palustris (strain BisB5).